The chain runs to 501 residues: MTQILETVDKSRLTVNPLLKNKSELGQFFTPSSISIFMACLFSEDKLNNAKVLDAGAGIGSLTSAFLARLISENIGKADLHLLEIDEMLEPYLSETLALFKDYIEINSQIIIDDFIEWAAYSLLDEESLLAKDKQRFTHAILNPPYKKIKSNSKHRKLLRKAGIETVNLYSAFVALTVDLMSDGGEIVFIIPRSFCNGPYFRHFRQHLLNKTSIKHMHLFESRDKAFKDDEVLQENVISKLEKGTVQEDVKISISTDDSFSVIRSYRYPFEKIVQPNDIEKFIHINTTNEETLIEKHPNVCYSLEELNIEVSTGPVVDFRVKENLREMPGEGTVPLFYPNHFVGTSLEYPKMMKKPNAIIRNEKVEKWLYPNGHYVVVKRFSSKEEKRRIVAGVLTPESVNDPVVGFENGLNVLHYNKSGISKEVAYGLYAYLNSTPVDKYFRIFNGHTQVNATDLRTMKFPSRDILISLGKWVIENIENVGQVEIDSKLEELLLNDRGNA.

It belongs to the N(4)/N(6)-methyltransferase family.

It carries out the reaction a 2'-deoxyadenosine in DNA + S-adenosyl-L-methionine = an N(6)-methyl-2'-deoxyadenosine in DNA + S-adenosyl-L-homocysteine + H(+). A beta subtype methylase that recognizes the double-stranded sequence 5'-CTGCAG-3', methylates A-5 on both strands, and protects the DNA from cleavage by the BsuBI endonuclease. This chain is Type II methyltransferase M.BsuBI (hsdBM), found in Bacillus subtilis.